The primary structure comprises 575 residues: Cytokinin dehydrogenase 1 (575 aa).

Positions 1 to 31 (MGLTSSLRFHRQNNKTFLGIFMILVLSCIPG) are cleaved as a signal peptide. N-linked (GlcNAc...) asparagine glycosylation is found at Asn-14, Asn-38, and Asn-115. One can recognise an FAD-binding PCMH-type domain in the interval 84-262 (YQLPPLAILH…TRARISLEPA (179 aa)). Residues Ala-120, Gly-122, and Gly-124 each contribute to the FAD site. A Pros-8alpha-FAD histidine modification is found at His-125. Positions 126, 130, 186, 191, 197, 201, and 252 each coordinate FAD. N-linked (GlcNAc...) asparagine glycosylation is found at Asn-303, Asn-318, Asn-437, and Asn-467. FAD is bound by residues Tyr-498 and Gln-536.

It belongs to the oxygen-dependent FAD-linked oxidoreductase family. FAD is required as a cofactor. Expressed in shoot apexes, lateral shoot meristems, growing tissues of young flowers, and weakly at the root-hypocotyl junction.

The protein resides in the vacuole. It catalyses the reaction N(6)-dimethylallyladenine + A + H2O = 3-methyl-2-butenal + adenine + AH2. Its function is as follows. Catalyzes the oxidation of cytokinins, a family of N(6)-substituted adenine derivatives that are plant hormones, where the substituent is an isopentenyl group. Catalyzes in vitro the oxidation of various types of cytokinin nucleotides that are known as direct products of cytokinin biosynthesis. Promotes adventitious root initiation downstream of MYC2-dependent jasmonate signaling. Cytokinin degraded by CKX1 is required for cell division in the female gametophyte by modulating the expression of cell cycle genes. This chain is Cytokinin dehydrogenase 1 (CKX1), found in Arabidopsis thaliana (Mouse-ear cress).